Here is a 438-residue protein sequence, read N- to C-terminus: PHAF1 protein CG7083 (438 aa).

This sequence belongs to the PHAF1 family.

Its subcellular location is the cytoplasm. The protein resides in the preautophagosomal structure. Functionally, may play a regulatory role in autophagic activity. This chain is PHAF1 protein CG7083, found in Drosophila melanogaster (Fruit fly).